Consider the following 823-residue polypeptide: DNA topoisomerase 4 subunit A (823 aa).

Positions 30–496 (LPDIRDGLKP…KAIEIDTASL (467 aa)) constitute a Topo IIA-type catalytic domain. Tyrosine 118 serves as the catalytic O-(5'-phospho-DNA)-tyrosine intermediate.

Belongs to the type II topoisomerase GyrA/ParC subunit family. ParC type 2 subfamily. In terms of assembly, heterotetramer composed of ParC and ParE.

The protein localises to the cell membrane. It catalyses the reaction ATP-dependent breakage, passage and rejoining of double-stranded DNA.. Its activity is regulated as follows. Inhibited by quinolones, such as levofloxacin. Topoisomerase IV is essential for chromosome segregation. It relaxes supercoiled DNA. Performs the decatenation events required during the replication of a circular DNA molecule. The sequence is that of DNA topoisomerase 4 subunit A from Streptococcus pneumoniae serotype 4 (strain ATCC BAA-334 / TIGR4).